Here is a 165-residue protein sequence, read N- to C-terminus: Phosphopantetheine adenylyltransferase (165 aa).

Threonine 9 is a binding site for substrate. Residues 9–10 (TF) and histidine 17 contribute to the ATP site. Positions 41, 73, and 87 each coordinate substrate. ATP is bound by residues 88-90 (GLR), glutamate 98, and 123-129 (YQFISGT).

Belongs to the bacterial CoaD family. Homohexamer. It depends on Mg(2+) as a cofactor.

It is found in the cytoplasm. It carries out the reaction (R)-4'-phosphopantetheine + ATP + H(+) = 3'-dephospho-CoA + diphosphate. Its pathway is cofactor biosynthesis; coenzyme A biosynthesis; CoA from (R)-pantothenate: step 4/5. Reversibly transfers an adenylyl group from ATP to 4'-phosphopantetheine, yielding dephospho-CoA (dPCoA) and pyrophosphate. This chain is Phosphopantetheine adenylyltransferase, found in Burkholderia lata (strain ATCC 17760 / DSM 23089 / LMG 22485 / NCIMB 9086 / R18194 / 383).